Consider the following 171-residue polypeptide: EDPGTMGPGNPAPSPDSDTPSDSSKGSDSNPALLLVGNAAPPVHKKDSVVWPAWVYCTRYSDRPSSGPRTRKLKKKKSEKEDKRPRTAFTAEQLQRLKAEFQANRYITEQRRQTLAQELSLNESQIKIWFQNKRAKIKKASGMKNGLALHLMAQGLYNHSTTTVQEKEESE.

Disordered stretches follow at residues 1–41 and 60–86; these read EDPG…NAAP and YSDR…KRPR. The span at 15–29 shows a compositional bias: low complexity; the sequence is PDSDTPSDSSKGSDS. A DNA-binding region (homeobox) is located at residues 82-141; the sequence is DKRPRTAFTAEQLQRLKAEFQANRYITEQRRQTLAQELSLNESQIKIWFQNKRAKIKKAS.

The protein belongs to the engrailed homeobox family.

Its subcellular location is the nucleus. Its function is as follows. Required for proper formation of the apical ectodermal ridge and correct dorsal-ventral patterning in the limb. This Xenopus laevis (African clawed frog) protein is Homeobox protein engrailed-1-B (en1-b).